Here is a 746-residue protein sequence, read N- to C-terminus: NAD(P)H-quinone oxidoreductase subunit 5, chloroplastic (746 aa).

Transmembrane regions (helical) follow at residues 9 to 29 (WIIPFIPLPVPILLGVGLLLF), 39 to 59 (IWTFLSIFLLSIVMIFSLYLS), 89 to 109 (IDPLTSIMSILITTVGILVLI), 125 to 145 (FAYMGFFNTSMLGLVTSSNLI), 147 to 167 (VYFFWELVGMCSYLLIGFWFT), 185 to 205 (GDFGLLLGILGLYWITGSFEF), 221 to 241 (VNFFFFTLCGFLLFVGPIAKS), 258 to 278 (TPISALIHAATMVAAGIFLVA), 280 to 300 (LLPLFIVIPSIMYIISLIGII), 327 to 347 (LGYMMLALGMGSYRSALFHLI), 354 to 374 (ALLFLGSGSIIHSMEAIVGYS), 396 to 416 (TAFLIGTLSLCGIPPLACFWS), 425 to 445 (LLFSPIFAIIACSTAGLTAFY), 547 to 567 (ILFPILILLLFTLFIGAIGIP), 608 to 628 (FSVSIAFFGIFIAYCLYKPFY), and 723 to 743 (YLFFYLSYVLIFLLILFFFYF).

It belongs to the complex I subunit 5 family. In terms of assembly, NDH is composed of at least 16 different subunits, 5 of which are encoded in the nucleus.

It localises to the plastid. The protein localises to the chloroplast thylakoid membrane. The catalysed reaction is a plastoquinone + NADH + (n+1) H(+)(in) = a plastoquinol + NAD(+) + n H(+)(out). It carries out the reaction a plastoquinone + NADPH + (n+1) H(+)(in) = a plastoquinol + NADP(+) + n H(+)(out). Functionally, NDH shuttles electrons from NAD(P)H:plastoquinone, via FMN and iron-sulfur (Fe-S) centers, to quinones in the photosynthetic chain and possibly in a chloroplast respiratory chain. The immediate electron acceptor for the enzyme in this species is believed to be plastoquinone. Couples the redox reaction to proton translocation, and thus conserves the redox energy in a proton gradient. The chain is NAD(P)H-quinone oxidoreductase subunit 5, chloroplastic (ndhF) from Capsella bursa-pastoris (Shepherd's purse).